Reading from the N-terminus, the 334-residue chain is D-aspartate oxidase 1 (334 aa).

5 residues coordinate FAD: Asp35, Arg36, Ser43, Gly307, and Thr312. The Microbody targeting signal signature appears at 332-334 (SKL).

This sequence belongs to the DAMOX/DASOX family. The cofactor is FAD. In terms of tissue distribution, expressed in the intestinal cells, hypodermis and in unidentified cells in the head in adult hermaphrodites.

The protein localises to the peroxisome matrix. It carries out the reaction D-aspartate + O2 + H2O = oxaloacetate + H2O2 + NH4(+). It catalyses the reaction D-glutamate + O2 + H2O = H2O2 + 2-oxoglutarate + NH4(+). Not inhibited by potassium bromide or thiolactomycin. Selectively catalyzes the oxidative deamination of acidic amino acids. May play a role in the egg-laying events and early development of the worm, in addition to quality control of the germ cells. In Caenorhabditis elegans, this protein is D-aspartate oxidase 1 (ddo-1).